The primary structure comprises 126 residues: MSGRGKGAKAKGKAKSRSSRAGLQFPVGRVHRFLRKGNYANRVGAGAPVYLAAVLEYLAAEILELAGNAARDNKKTRIIPRHLQLAIRNDEELNKLLGGVTIAQGGVLPNIQAVLLPKKTGSKSSK.

Residues 1–18 are compositionally biased toward basic residues; it reads MSGRGKGAKAKGKAKSRS. The disordered stretch occupies residues 1-21; sequence MSGRGKGAKAKGKAKSRSSRA. Residue serine 2 is modified to N-acetylserine. Serine 2 is modified (phosphoserine). Glutamine 104 is modified (N5-methylglutamine). A Glycyl lysine isopeptide (Lys-Gly) (interchain with G-Cter in ubiquitin) cross-link involves residue lysine 119.

It belongs to the histone H2A family. As to quaternary structure, the nucleosome is a histone octamer containing two molecules each of H2A, H2B, H3 and H4 assembled in one H3-H4 heterotetramer and two H2A-H2B heterodimers. The octamer wraps approximately 147 bp of DNA. Post-translationally, monoubiquitination of Lys-119 gives a specific tag for epigenetic transcriptional repression. In terms of processing, phosphorylation of Ser-2 directly represses transcription.

Its subcellular location is the nucleus. The protein resides in the chromosome. Core component of nucleosome. Nucleosomes wrap and compact DNA into chromatin, limiting DNA accessibility to the cellular machineries which require DNA as a template. Histones thereby play a central role in transcription regulation, DNA repair, DNA replication and chromosomal stability. DNA accessibility is regulated via a complex set of post-translational modifications of histones, also called histone code, and nucleosome remodeling. In Psammechinus miliaris (Green sea urchin), this protein is Late histone H2A.3, gonadal.